Here is a 158-residue protein sequence, read N- to C-terminus: Phosphopantetheine adenylyltransferase (158 aa).

Ser-10 serves as a coordination point for substrate. ATP is bound by residues 10-11 (SF) and His-18. Substrate contacts are provided by Lys-42, Leu-74, and Arg-88. ATP is bound by residues 89 to 91 (GLR), Glu-99, and 124 to 130 (YANISSS).

Belongs to the bacterial CoaD family. Homohexamer. Mg(2+) is required as a cofactor.

The protein resides in the cytoplasm. It catalyses the reaction (R)-4'-phosphopantetheine + ATP + H(+) = 3'-dephospho-CoA + diphosphate. It functions in the pathway cofactor biosynthesis; coenzyme A biosynthesis; CoA from (R)-pantothenate: step 4/5. Functionally, reversibly transfers an adenylyl group from ATP to 4'-phosphopantetheine, yielding dephospho-CoA (dPCoA) and pyrophosphate. This Vesicomyosocius okutanii subsp. Calyptogena okutanii (strain HA) protein is Phosphopantetheine adenylyltransferase.